Consider the following 315-residue polypeptide: Acetyl-coenzyme A carboxylase carboxyl transferase subunit beta, chloroplastic (315 aa).

Residues 47 to 315 (LWTRCDSCEN…VYKESNSYLF (269 aa)) enclose the CoA carboxyltransferase N-terminal domain. The Zn(2+) site is built by cysteine 51, cysteine 54, cysteine 70, and cysteine 73. A C4-type zinc finger spans residues 51-73 (CDSCENMLYVRFLKQNKRICEEC).

It belongs to the AccD/PCCB family. In terms of assembly, acetyl-CoA carboxylase is a heterohexamer composed of biotin carboxyl carrier protein, biotin carboxylase and 2 subunits each of ACCase subunit alpha and ACCase plastid-coded subunit beta (accD). It depends on Zn(2+) as a cofactor.

It localises to the plastid. The protein resides in the chloroplast stroma. It carries out the reaction N(6)-carboxybiotinyl-L-lysyl-[protein] + acetyl-CoA = N(6)-biotinyl-L-lysyl-[protein] + malonyl-CoA. It participates in lipid metabolism; malonyl-CoA biosynthesis; malonyl-CoA from acetyl-CoA: step 1/1. Its function is as follows. Component of the acetyl coenzyme A carboxylase (ACC) complex. Biotin carboxylase (BC) catalyzes the carboxylation of biotin on its carrier protein (BCCP) and then the CO(2) group is transferred by the transcarboxylase to acetyl-CoA to form malonyl-CoA. This chain is Acetyl-coenzyme A carboxylase carboxyl transferase subunit beta, chloroplastic, found in Physcomitrium patens (Spreading-leaved earth moss).